Consider the following 242-residue polypeptide: DNA repair protein RecO (242 aa).

This sequence belongs to the RecO family.

Functionally, involved in DNA repair and RecF pathway recombination. This chain is DNA repair protein RecO, found in Paracoccus denitrificans (strain Pd 1222).